The chain runs to 219 residues: Adenylate kinase (219 aa).

Position 10–15 (10–15) interacts with ATP; that stretch reads GAGKGT. The NMP stretch occupies residues 30 to 59; the sequence is STGDMLRAAVKAGTPLGQQAKKIMDEGGLV. AMP is bound by residues threonine 31, arginine 36, 57–59, 85–88, and glutamine 92; these read GLV and GFPR. The tract at residues 122–159 is LID; sequence GRRVHPGSGRVYHVTHNPPRQEGKDDVTGEDLVQREDD. Residues arginine 123 and 132–133 contribute to the ATP site; that span reads VY. The interval 128 to 150 is disordered; that stretch reads GSGRVYHVTHNPPRQEGKDDVTG. Residues 140-150 show a composition bias toward basic and acidic residues; it reads PRQEGKDDVTG. AMP is bound by residues arginine 156 and arginine 167. Residue arginine 203 participates in ATP binding.

It belongs to the adenylate kinase family. As to quaternary structure, monomer.

Its subcellular location is the cytoplasm. It catalyses the reaction AMP + ATP = 2 ADP. It participates in purine metabolism; AMP biosynthesis via salvage pathway; AMP from ADP: step 1/1. Functionally, catalyzes the reversible transfer of the terminal phosphate group between ATP and AMP. Plays an important role in cellular energy homeostasis and in adenine nucleotide metabolism. This chain is Adenylate kinase, found in Halorhodospira halophila (strain DSM 244 / SL1) (Ectothiorhodospira halophila (strain DSM 244 / SL1)).